The chain runs to 100 residues: Small ribosomal subunit protein uS14c (100 aa).

It belongs to the universal ribosomal protein uS14 family. As to quaternary structure, part of the 30S ribosomal subunit.

It localises to the plastid. The protein localises to the chloroplast. In terms of biological role, binds 16S rRNA, required for the assembly of 30S particles. This Aethionema cordifolium (Lebanon stonecress) protein is Small ribosomal subunit protein uS14c.